A 690-amino-acid chain; its full sequence is Eukaryotic translation initiation factor 3 subunit B (690 aa).

Over residues 1 to 11 (MAKKKSEEHSG) the composition is skewed to basic and acidic residues. Positions 1–33 (MAKKKSEEHSGTDANDSDYQEEPNFDDPPGFVD) are disordered. A compositionally biased stretch (acidic residues) spans 15–25 (NDSDYQEEPNF). The RRM domain maps to 57 to 141 (SVVVVDNIPK…HTFAVNLFTD (85 aa)). WD repeat units follow at residues 207–246 (TRER…KIQK), 293–331 (DGMS…LLDL), 334–369 (IKIP…TLME), 442–484 (EIRE…KPSL), and 530–575 (PDHF…IKRT). Residues 595–645 (EEKQKEIKKNLKKYYAAFEQKDRLRLTRASKELLEKRSQLRETFMEYRNKR) are a coiled coil.

Belongs to the eIF-3 subunit B family. Component of the eukaryotic translation initiation factor 3 (eIF-3) complex. The eIF-3 complex interacts with pix. Interacts with mxt.

It localises to the cytoplasm. In terms of biological role, RNA-binding component of the eukaryotic translation initiation factor 3 (eIF-3) complex, which is involved in protein synthesis of a specialized repertoire of mRNAs and, together with other initiation factors, stimulates binding of mRNA and methionyl-tRNAi to the 40S ribosome. The eIF-3 complex specifically targets and initiates translation of a subset of mRNAs involved in cell proliferation. The sequence is that of Eukaryotic translation initiation factor 3 subunit B from Drosophila melanogaster (Fruit fly).